A 225-amino-acid polypeptide reads, in one-letter code: Putative amino-acid transporter YggA (225 aa).

5 consecutive transmembrane segments (helical) span residues methionine 1–alanine 21, leucine 37–glycine 57, serine 65–isoleucine 85, leucine 116–phenylalanine 136, and alanine 150–leucine 170.

This sequence belongs to the LysE/ArgO transporter (TC 2.A.75) family.

Its subcellular location is the cell membrane. This is Putative amino-acid transporter YggA from Aeromonas hydrophila.